A 234-amino-acid chain; its full sequence is Sugar fermentation stimulation protein A (234 aa).

A DNA-binding region (H-T-H motif) is located at residues 201–220 (LLSEAQQRGVEILAYKAELS).

The protein belongs to the SfsA family.

Functionally, binds to DNA non-specifically. Could be a regulatory factor involved in maltose metabolism. This is Sugar fermentation stimulation protein A from Escherichia coli O127:H6 (strain E2348/69 / EPEC).